We begin with the raw amino-acid sequence, 254 residues long: Leucyl/phenylalanyl-tRNA--protein transferase (254 aa).

It belongs to the L/F-transferase family.

It localises to the cytoplasm. The enzyme catalyses N-terminal L-lysyl-[protein] + L-leucyl-tRNA(Leu) = N-terminal L-leucyl-L-lysyl-[protein] + tRNA(Leu) + H(+). The catalysed reaction is N-terminal L-arginyl-[protein] + L-leucyl-tRNA(Leu) = N-terminal L-leucyl-L-arginyl-[protein] + tRNA(Leu) + H(+). It catalyses the reaction L-phenylalanyl-tRNA(Phe) + an N-terminal L-alpha-aminoacyl-[protein] = an N-terminal L-phenylalanyl-L-alpha-aminoacyl-[protein] + tRNA(Phe). Its function is as follows. Functions in the N-end rule pathway of protein degradation where it conjugates Leu, Phe and, less efficiently, Met from aminoacyl-tRNAs to the N-termini of proteins containing an N-terminal arginine or lysine. The sequence is that of Leucyl/phenylalanyl-tRNA--protein transferase from Burkholderia ambifaria (strain MC40-6).